The chain runs to 152 residues: Nucleoside diphosphate kinase A (152 aa).

ATP is bound by residues K12, F60, R88, and T94. K100 is covalently cross-linked (Glycyl lysine isopeptide (Lys-Gly) (interchain with G-Cter in ubiquitin)). R105 and N115 together coordinate ATP. H118 serves as the catalytic Pros-phosphohistidine intermediate. Residues S120, S122, and S125 each carry the phosphoserine modification.

Belongs to the NDK family. As to quaternary structure, hexamer of two different chains: An and B (A6, A5B, A4B2, A3B3, A2B4, AB5, B6). Interacts with PRUNE1. Component of the SET complex, composed of at least ANP32A, APEX1, HMGB2, NME1, SET and TREX1. Within this complex, interacts directly with SET. Also interacts with TREX1, but only following translocation to the nucleus. Requires Mg(2+) as cofactor.

The protein localises to the cytoplasm. It localises to the nucleus. The enzyme catalyses a 2'-deoxyribonucleoside 5'-diphosphate + ATP = a 2'-deoxyribonucleoside 5'-triphosphate + ADP. It carries out the reaction a ribonucleoside 5'-diphosphate + ATP = a ribonucleoside 5'-triphosphate + ADP. With respect to regulation, autophosphorylation at His-118 increases serine/threonine protein kinase activity of the enzyme. Interaction with the SET complex inhibits exonuclease activity. Its function is as follows. Major role in the synthesis of nucleoside triphosphates other than ATP. The ATP gamma phosphate is transferred to the NDP beta phosphate via a ping-pong mechanism, using a phosphorylated active-site intermediate. Possesses nucleoside-diphosphate kinase, serine/threonine-specific protein kinase, geranyl and farnesyl pyrophosphate kinase, histidine protein kinase and 3'-5' exonuclease activities. Involved in cell proliferation, differentiation and development, signal transduction, G protein-coupled receptor endocytosis, and gene expression. Required for neural development including neural patterning and cell fate determination. During GZMA-mediated cell death, works in concert with TREX1. NME1 nicks one strand of DNA and TREX1 removes bases from the free 3' end to enhance DNA damage and prevent DNA end reannealing and rapid repair. This is Nucleoside diphosphate kinase A (Nme1) from Rattus norvegicus (Rat).